A 791-amino-acid chain; its full sequence is MSRRRHSDENDGGPHHKRRKTSEPLEIEDRLESLICRVGEKSTSSLESNLEGLAGVLEADLPNYKSKILRILCSVARTLPEKMTVYTTLVGLLNARNYNFGGEFVEAMIRHLKETIKLNAYNEAVYLVRFLCDLVNCHVIAAPSMVAMFESFVGVTQEEDIPQVRSDWYVYAVLSSLPWVGKELYEKKDVEMDRILSQIEAYLKQRQKLHVSILQVWSAEKPHPQEEYLDCLWAQIQKLKKDRWQERHILRPYLAFDSVLCEALQHNLPPFTPPPHTEDSVYPVPRVVFRMFDYTDAPEGPVMPGSHSVERFVIEENLHCILRSHWRERKTCAAQLLSYPEKNKIPLNYHIVEVIFGELFQLPNPPHLDVMYTTLLIELCKLQPGSLPQVLAQASEMLYTRLDTMNTICIDRFINWFSHHLSNFQFRWNWEDWSDCLSQDLDKPKPQFVREVLEKCMRLSYHQRILDIVPAAFSALYPASPSCVFKYGDESNSALPGYSVAVALTNAIKNKASDKEIFNILKDIPNPNQDDDDDEGISFNPLKIEVFVQTLLSLASKSFSHSFSALAKFHDIFKALSESDEGKLHILRVVYDIWKNHPQMIAVLVDKMIRTQIVDCAAVANWIFSPELSRDFPRFYIWEILHSTIRKMNKHVQKIQKELEDMKLRLAKQHKHRDSDDNDEDSGRKDGPLEEQIERLQEKVESAQSEQKNLFLVIFQRFIMILTEHLVRCETGGIDVNTAWYKNCRERLQQIFLQHHQIIQQYMVTLENLLFTAELDHHILTVFQQFCALQS.

A compositionally biased stretch (basic and acidic residues) spans 1–14 (MSRRRHSDENDGGP). A disordered region spans residues 1 to 24 (MSRRRHSDENDGGPHHKRRKTSEP). Residues 28–240 (EDRLESLICR…CLWAQIQKLK (213 aa)) enclose the MIF4G domain. A coiled-coil region spans residues 641-714 (LHSTIRKMNK…SEQKNLFLVI (74 aa)). Residues 668–687 (KQHKHRDSDDNDEDSGRKDG) form a disordered region.

It belongs to the NCBP1 family. In terms of assembly, component of the nuclear cap-binding complex (CBC), a heterodimer composed of ncbp1/cbp80 and ncbp2/cbp20 that interacts with m7GpppG-capped RNA. Component of an alternative nuclear cap-binding complex (CBC) composed of ncbp1/cbp80 and ncbp3.

It localises to the nucleus. Its subcellular location is the cytoplasm. Component of the cap-binding complex (CBC), which binds cotranscriptionally to the 5'-cap of pre-mRNAs and is involved in various processes such as pre-mRNA splicing, translation regulation, nonsense-mediated mRNA decay, RNA-mediated gene silencing (RNAi) by microRNAs (miRNAs) and mRNA export. The CBC complex is involved in mRNA export from the nucleus, leading to the recruitment of the mRNA export machinery to the 5'-end of mRNA and to mRNA export in a 5' to 3' direction through the nuclear pore. The CBC complex is also involved in mediating U snRNA and intronless mRNAs export from the nucleus. The CBC complex is essential for a pioneer round of mRNA translation, before steady state translation when the CBC complex is replaced by cytoplasmic cap-binding protein eIF4E. The pioneer round of mRNA translation mediated by the CBC complex plays a central role in nonsense-mediated mRNA decay (NMD), NMD only taking place in mRNAs bound to the CBC complex, but not on eIF4E-bound mRNAs. The CBC complex enhances NMD in mRNAs containing at least one exon-junction complex (EJC), promoting the interaction between UPF1 and UPF2. The CBC complex is also involved in 'failsafe' NMD, which is independent of the EJC complex, while it does not participate in Staufen-mediated mRNA decay (SMD). During cell proliferation, the CBC complex is also involved in microRNAs (miRNAs) biogenesis via its interaction with SRRT/ARS2 and is required for miRNA-mediated RNA interference. The CBC complex also acts as a negative regulator of parn, thereby acting as an inhibitor of mRNA deadenylation. In the CBC complex, ncbp1/cbp80 does not bind directly capped RNAs (m7GpppG-capped RNA) but is required to stabilize the movement of the N-terminal loop of ncbp2/cbp20 and lock the CBC into a high affinity cap-binding state with the cap structure. Associates with NCBP3 to form an alternative cap-binding complex (CBC) which plays a key role in mRNA export. The conventional CBC with NCBP2 binds both small nuclear RNA (snRNA) and messenger (mRNA) and is involved in their export from the nucleus whereas the alternative CBC with NCBP3 does not bind snRNA and associates only with mRNA thereby playing a role only in mRNA export. This is Nuclear cap-binding protein subunit 1 (ncbp1) from Xenopus tropicalis (Western clawed frog).